The chain runs to 330 residues: Glycerol-3-phosphate dehydrogenase [NAD(P)+] (330 aa).

Positions 11, 31, 32, and 105 each coordinate NADPH. 2 residues coordinate sn-glycerol 3-phosphate: lysine 105 and glycine 133. Residue alanine 137 coordinates NADPH. Sn-glycerol 3-phosphate contacts are provided by lysine 188, aspartate 241, serine 251, arginine 252, and asparagine 253. Lysine 188 serves as the catalytic Proton acceptor. NADPH is bound at residue arginine 252. Leucine 277 and glutamate 279 together coordinate NADPH.

This sequence belongs to the NAD-dependent glycerol-3-phosphate dehydrogenase family.

The protein localises to the cytoplasm. It carries out the reaction sn-glycerol 3-phosphate + NAD(+) = dihydroxyacetone phosphate + NADH + H(+). The catalysed reaction is sn-glycerol 3-phosphate + NADP(+) = dihydroxyacetone phosphate + NADPH + H(+). The protein operates within membrane lipid metabolism; glycerophospholipid metabolism. Functionally, catalyzes the reduction of the glycolytic intermediate dihydroxyacetone phosphate (DHAP) to sn-glycerol 3-phosphate (G3P), the key precursor for phospholipid synthesis. This chain is Glycerol-3-phosphate dehydrogenase [NAD(P)+], found in Orientia tsutsugamushi (strain Boryong) (Rickettsia tsutsugamushi).